A 1069-amino-acid polypeptide reads, in one-letter code: Epstein-Barr nuclear antigen 6 (1069 aa).

Disordered regions lie at residues 1-75, 353-708, 733-776, 884-932, and 1008-1069; these read MESF…RIRR, MLAT…PCQS, SSMS…LYPG, REPR…PPRL, and PLDI…SELD. Positions 50–67 are enriched in basic and acidic residues; it reads PDSRDQQSRGQRRGDENR. Acidic residues-rich tracts occupy residues 381–391 and 507–524; these read VELESSDDELP and YDDD…EEET. Polar residues predominate over residues 543–561; the sequence is STGSAMSSSHTDPSVTQPS. Low complexity predominate over residues 689 to 708; sequence QQEPSSQQQPATQSTPPCQS. Positions 742 to 751 are enriched in basic and acidic residues; that stretch reads SHEEQPRYED. The segment covering 1032-1048 has biased composition (polar residues); it reads SQATSEAQEILSDNSEI.

This sequence belongs to the herpesviridae EBNA-6 family. As to quaternary structure, interacts with host CTPB1; this interaction leads to gene repression, but also seems to interfere with the repressive function of CtBP pre-bound to DNA, leading to EBNA6 mediated up-regulation of many host genes. Interacts with host MYC; this interaction enhances MYC stability. Interacts (via N-terminus) with host RBPJ. Interacts (via N-terminus) with host histone H2AX; this interaction facilitates H2AX proteasomal degradation. Interacts with host TP73; this interaction inhibits TP73-mediated apoptotic pathway. Interacts (via N-terminus) with host PIM1; this interaction upregulates and stabilizes PIM1 and induces cell proliferation by inhibiting the growth suppressive properties of p21.

Its subcellular location is the host nucleus. The protein resides in the host nucleus matrix. Functionally, plays an essential role for the activation and immortalization of human B-cells. Represses transcription of viral promoters TP1 and Cp through interaction with host RBPJ, and inhibits EBNA2-mediated activation of these promoters. Targets host chromatin through interactions with host transcription factors, especially RBPJ and IRF4. Alternatively, EBNA6 also regulates the transcription of the EBV oncogene LMP1 in a cell cycle-dependent manner. Modulates the activity of several host proteins involved in cell cycle regulation including host cyclin A, MYC, RB, p21 and p27 mainly through binding to the host SCF(SKP2) complex. Inhibits the promoter of host H2AX and targets H2AX to proteasomal degradation in order to promote latency and cell proliferation. Upregulates host PIM1 expression and stabilization. Potentiates PIM1 to promote cell proliferation by inhibiting the growth suppressive properties of p21. The sequence is that of Epstein-Barr nuclear antigen 6 (EBNA6) from Epstein-Barr virus (strain AG876) (HHV-4).